The primary structure comprises 500 residues: L-arabinose isomerase (500 aa).

Positions 306, 333, 350, and 450 each coordinate Mn(2+).

This sequence belongs to the arabinose isomerase family. Homohexamer. Mn(2+) serves as cofactor.

The catalysed reaction is beta-L-arabinopyranose = L-ribulose. Its pathway is carbohydrate degradation; L-arabinose degradation via L-ribulose; D-xylulose 5-phosphate from L-arabinose (bacterial route): step 1/3. Catalyzes the conversion of L-arabinose to L-ribulose. The protein is L-arabinose isomerase of Shigella boydii serotype 18 (strain CDC 3083-94 / BS512).